The chain runs to 341 residues: Fructose-1,6-bisphosphatase class 1 1 (341 aa).

Mg(2+) contacts are provided by Glu92, Asp114, Leu116, and Asp117. Substrate contacts are provided by residues 117–120 (DGSS), Asn209, and Lys275. A Mg(2+)-binding site is contributed by Glu281.

Belongs to the FBPase class 1 family. Homotetramer. It depends on Mg(2+) as a cofactor.

It is found in the cytoplasm. The catalysed reaction is beta-D-fructose 1,6-bisphosphate + H2O = beta-D-fructose 6-phosphate + phosphate. It participates in carbohydrate biosynthesis; gluconeogenesis. This Leptothrix cholodnii (strain ATCC 51168 / LMG 8142 / SP-6) (Leptothrix discophora (strain SP-6)) protein is Fructose-1,6-bisphosphatase class 1 1.